The chain runs to 860 residues: MYSGAGPVLASPAPTTSPIPGYAFKPPPRPDFGTTGRTIKLQANFFEMDIPKIDIYHYELDIKPEKCPRRVNREIVEHMVQHFKTQIFGDRKPVFDGRKNLYTAMPLPIGRDKVELEVTLPGEGKDRIFKVSIKWVSCVSLQALHDALSGRLPSVPFETIQALDVVMRHLPSMRYTPVGRSFFTASEGCSNPLGGGREVWFGFHQSVRPSLWKMMLNIDVSATAFYKAQPVIEFVCEVLDFKSIEEQQKPLTDSQRVKFTKEIKGLKVEITHCGQMKRKYRVCNVTRRPASHQTFPLQQESGQTVECTVAQYFKDRHKLVLRYPHLPCLQVGQEQKHTYLPLEVCNIVAGQRCIKKLTDNQTSTMIRATARSAPDRQEEISKLMRSASFNTDPYVREFGIMVKDEMTDVTGRVLQPPSILYGGRNKAIATPVQGVWDMRNKQFHTGIEIKVWAIACFAPQRQCTEVHLKSFTEQLRKISRDAGMPIQGQPCFCKYAQGADSVEPMFRHLKNTYAGLQLVVVILPGKTPVYAEVKRVGDTVLGMATQCVQMKNVQRTTPQTLSNLCLKINVKLGGVNNILLPQGRPPVFQQPVIFLGADVTHPPAGDGKKPSIAAVVGSMDAHPNRYCATVRVQQHRQEIIQDLAAMVRELLIQFYKSTRFKPTRIIFYRDGVSEGQFQQVLHHELLAIREACIKLEKDYQPGITFIVVQKRHHTRLFCTDKNERVGKSGNIPAGTTVDTKITHPTEFDFYLCSHAGIQGTSRPSHYHVLWDDNRFSSDELQILTYQLCHTYVRCTRSVSIPAPAYYAHLVAFRARYHLVDKEHDSAEGSHTSGQSNGRDHQALAKAVQVHQDTLRTMYFA.

Tyr2 bears the 3'-nitrotyrosine mark. The 120-residue stretch at 230–349 (PVIEFVCEVL…LPLEVCNIVA (120 aa)) folds into the PAZ domain. Positions 312–317 (YFKDRH) are interaction with guide RNA. At Ser388 the chain carries Phosphoserine. A Piwi domain is found at 518-819 (LVVVILPGKT…VAFRARYHLV (302 aa)). The segment at 525 to 567 (GKTPVYAEVKRVGDTVLGMATQCVQMKNVQRTTPQTLSNLCLK) is interaction with guide RNA. The interval 588 to 591 (FQQP) is interaction with GW182 family members. Residue Asp598 coordinates a divalent metal cation. The tract at residues 651–661 (LIQFYKSTRFK) is interaction with GW182 family members. Asp670 serves as a coordination point for a divalent metal cation. Pro701 is modified (4-hydroxyproline). Interaction with guide RNA stretches follow at residues 710 to 711 (KR), 754 to 762 (HAGIQGTSR), and 791 to 813 (YVRC…VAFR). Position 808 (His808) interacts with a divalent metal cation. Phosphoserine is present on residues Ser825, Ser829, Ser832, and Ser835.

The protein belongs to the argonaute family. Ago subfamily. Interacts with DICER1 through its Piwi domain and with TARBP2 during assembly of the RNA-induced silencing complex (RISC). Together, DICER1, AGO2 and TARBP2 constitute the trimeric RISC loading complex (RLC), or micro-RNA (miRNA) loading complex (miRLC). Within the RLC/miRLC, DICER1 and TARBP2 are required to process precursor miRNAs (pre-miRNAs) to mature miRNAs and then load them onto AGO2. AGO2 bound to the mature miRNA constitutes the minimal RISC and may subsequently dissociate from DICER1 and TARBP2. Note however that the term RISC has also been used to describe the trimeric RLC/miRLC. The formation of RISC complexes containing siRNAs rather than miRNAs appears to occur independently of DICER1. Interacts with AGO1. Also interacts with DDB1, DDX5, DDX6, DDX20, DHX30, DHX36, DDX47, DHX9, ELAVL, FXR1, GEMIN4, HNRNPF, IGF2BP1, ILF3, IMP8, MATR3, PABPC1, PRMT5, P4HA1, P4HB, RBM4, SART3, TNRC6A, TNRC6B, UPF1 and YBX1. Interacts with the P-body components DCP1A and XRN1. Associates with polysomes and messenger ribonucleoproteins (mNRPs). Interacts with RBM4; the interaction is modulated under stress-induced conditions, occurs under both cell proliferation and differentiation conditions and in an RNA- and phosphorylation-independent manner. Interacts with LIMD1, WTIP and AJUBA. Interacts with TRIM71. Interacts with APOBEC3G in an RNA-dependent manner. Interacts with APOBEC3A, APOBEC3C, APOBEC3F and APOBEC3H. Interacts with DICER1, TARBP2, EIF6, MOV10 and RPL7A (60S ribosome subunit); they form a large RNA-induced silencing complex (RISC). Interacts with FMR1. Interacts with ZFP36. Interacts with RC3H1; the interaction is RNA independent. Interacts with ARB2A. Found in a complex composed of AGO2, CHD7 and ARB2A. Interacts with SND1 and SYT11. Interacts with CLNK. Interacts with GARRE1. Interacts with GRB2; this interaction is important for the formation of a ternary complex containing GRB2, AGO2 and DICER1. Mg(2+) serves as cofactor. Requires Mn(2+) as cofactor. Post-translationally, hydroxylated. 4-hydroxylation appears to enhance protein stability but is not required for miRNA-binding or endonuclease activity. Ubiquitinated on surface-exposed lysines by a SCF-like E3 ubiquitin-protein ligase complex containing ZSWIM8 during target-directed microRNA degradation (TDMD), a process that mediates degradation of microRNAs (miRNAs). Ubiquitination by the SCF-like E3 ubiquitin-protein ligase complex containing ZSWIM8 leads to its subsequent degradation, thereby exposing miRNAs for degradation. ZSWIM8 recognizes and binds AGO2 when it is engaged with a TDMD target. In terms of processing, phosphorylation at Ser-388 by AKT3; leads to up-regulate translational repression of microRNA target and down-regulate endonucleolytic cleavage. Post-translationally, a phosphorylation cycle of C-terminal serine cluster (Ser-825-Ser-835) regulates the release of target mRNAs. Target-binding leads to phosphorylation of these residues by CSNK1A1, which reduces the affinity of AGO2 for mRNA and enables target release. The ANKRD52-PPP6C phosphatase complex dephosphorylates the residues, which primes AGO2 for binding a new target. Ubiquitous expression in 9.5 day embryos with highest levels in forebrain, heart, limb buds, and branchial arches.

Its subcellular location is the cytoplasm. The protein localises to the P-body. It localises to the nucleus. It catalyses the reaction Endonucleolytic cleavage to 5'-phosphomonoester.. Its function is as follows. Required for RNA-mediated gene silencing (RNAi) by the RNA-induced silencing complex (RISC). The 'minimal RISC' appears to include AGO2 bound to a short guide RNA such as a microRNA (miRNA) or short interfering RNA (siRNA). These guide RNAs direct RISC to complementary mRNAs that are targets for RISC-mediated gene silencing. The precise mechanism of gene silencing depends on the degree of complementarity between the miRNA or siRNA and its target. Binding of RISC to a perfectly complementary mRNA generally results in silencing due to endonucleolytic cleavage of the mRNA specifically by AGO2. Binding of RISC to a partially complementary mRNA results in silencing through inhibition of translation, and this is independent of endonuclease activity. May inhibit translation initiation by binding to the 7-methylguanosine cap, thereby preventing the recruitment of the translation initiation factor eIF4-E. May also inhibit translation initiation via interaction with EIF6, which itself binds to the 60S ribosomal subunit and prevents its association with the 40S ribosomal subunit. The inhibition of translational initiation leads to the accumulation of the affected mRNA in cytoplasmic processing bodies (P-bodies), where mRNA degradation may subsequently occur. In some cases RISC-mediated translational repression is also observed for miRNAs that perfectly match the 3' untranslated region (3'-UTR). Can also up-regulate the translation of specific mRNAs under certain growth conditions. Binds to the AU element of the 3'-UTR of the TNF (TNF-alpha) mRNA and up-regulates translation under conditions of serum starvation. Also required for transcriptional gene silencing (TGS), in which short RNAs known as antigene RNAs or agRNAs direct the transcriptional repression of complementary promoter regions. Regulates lymphoid and erythroid development and function, and this is independent of endonuclease activity. In Mus musculus (Mouse), this protein is Protein argonaute-2 (Ago2).